Here is a 547-residue protein sequence, read N- to C-terminus: Chaperonin GroEL (547 aa).

ATP is bound by residues 30–33 (TLGP), Lys-51, 87–91 (DGTTT), Gly-415, and Asp-496. The disordered stretch occupies residues 528 to 547 (KEGAGAGGGMPDMGGMGGMM). Positions 531–547 (AGAGGGMPDMGGMGGMM) are enriched in gly residues.

The protein belongs to the chaperonin (HSP60) family. In terms of assembly, forms a cylinder of 14 subunits composed of two heptameric rings stacked back-to-back. Interacts with the co-chaperonin GroES.

It is found in the cytoplasm. It carries out the reaction ATP + H2O + a folded polypeptide = ADP + phosphate + an unfolded polypeptide.. In terms of biological role, together with its co-chaperonin GroES, plays an essential role in assisting protein folding. The GroEL-GroES system forms a nano-cage that allows encapsulation of the non-native substrate proteins and provides a physical environment optimized to promote and accelerate protein folding. The chain is Chaperonin GroEL from Dinoroseobacter shibae (strain DSM 16493 / NCIMB 14021 / DFL 12).